A 116-amino-acid chain; its full sequence is Early 4 ORF3 protein (116 aa).

It belongs to the adenoviridae E4 ORF3 family. Homodimer. Multimerizes through C-terminus tail by reciprocal or nonreciprocal interactions. Interacts with host PML isoform 2 C-terminal disordered region. Interacts with E1B-55k; this interaction is necessary for E1B 55 kDa protein to localize to the nuclear matrix fraction of the cell. May interact with host TRIM24, CREBBP, EP300, PRKDC and the MRN complex MRE11/RAD50/NBS1; these interactions may happen through nuclear bodies complexes.

The protein resides in the host nucleus. Its function is as follows. Forms a multivalent network in host nucleus that inhibits nuclear bodies and prevents antiviral cellular activities. The network is made of multimerized dimers and surrounds adenovirus replication centers and nucleolus. Plays a role in splicing of the major late transcript. Prevents viral genome concatemer formation. This is Early 4 ORF3 protein from Human adenovirus C serotype 2 (HAdV-2).